A 563-amino-acid chain; its full sequence is Arginine--tRNA ligase (563 aa).

The short motif at 120 to 130 (PNIAKPFHIGH) is the 'HIGH' region element.

Belongs to the class-I aminoacyl-tRNA synthetase family. In terms of assembly, monomer.

The protein resides in the cytoplasm. The enzyme catalyses tRNA(Arg) + L-arginine + ATP = L-arginyl-tRNA(Arg) + AMP + diphosphate. In Clostridium botulinum (strain Okra / Type B1), this protein is Arginine--tRNA ligase.